A 563-amino-acid chain; its full sequence is Bifunctional dihydrofolate reductase-thymidylate synthase (563 aa).

In terms of domain architecture, DHFR spans 3–195 (KFNIIAAINN…ILLRFQEYSV (193 aa)). 117 to 124 (GGGVIYDL) lines the NADP(+) pocket. Residues 275-563 (YIELVKTIME…CPSISAEMIA (289 aa)) are thymidylate synthase. Position 292 (arginine 292) interacts with dUMP. Cysteine 435 is a catalytic residue. Residues histidine 436, 464-468 (QRSWD), asparagine 474, and 504-506 (HIY) contribute to the dUMP site.

The protein in the N-terminal section; belongs to the dihydrofolate reductase family. This sequence in the C-terminal section; belongs to the thymidylate synthase family.

It catalyses the reaction (6S)-5,6,7,8-tetrahydrofolate + NADP(+) = 7,8-dihydrofolate + NADPH + H(+). It carries out the reaction dUMP + (6R)-5,10-methylene-5,6,7,8-tetrahydrofolate = 7,8-dihydrofolate + dTMP. The protein operates within cofactor biosynthesis; tetrahydrofolate biosynthesis; 5,6,7,8-tetrahydrofolate from 7,8-dihydrofolate: step 1/1. Functionally, bifunctional enzyme. Involved in de novo dTMP biosynthesis. Key enzyme in folate metabolism. Catalyzes an essential reaction for de novo glycine and purine synthesis, DNA precursor synthesis, and for the conversion of dUMP to dTMP. This is Bifunctional dihydrofolate reductase-thymidylate synthase from Acanthamoeba polyphaga mimivirus (APMV).